Here is a 490-residue protein sequence, read N- to C-terminus: 3-octaprenyl-4-hydroxybenzoate carboxy-lyase (490 aa).

Asn172 is a Mn(2+) binding site. Prenylated FMN-binding positions include Ile175 to Arg177, Arg189 to Leu191, and Arg194 to Gly195. Residue Glu238 coordinates Mn(2+). Catalysis depends on Asp287, which acts as the Proton donor.

Belongs to the UbiD family. As to quaternary structure, homohexamer. Prenylated FMN serves as cofactor. Requires Mn(2+) as cofactor.

Its subcellular location is the cell membrane. It carries out the reaction a 4-hydroxy-3-(all-trans-polyprenyl)benzoate + H(+) = a 2-(all-trans-polyprenyl)phenol + CO2. The protein operates within cofactor biosynthesis; ubiquinone biosynthesis. Catalyzes the decarboxylation of 3-octaprenyl-4-hydroxy benzoate to 2-octaprenylphenol, an intermediate step in ubiquinone biosynthesis. This Idiomarina loihiensis (strain ATCC BAA-735 / DSM 15497 / L2-TR) protein is 3-octaprenyl-4-hydroxybenzoate carboxy-lyase.